The chain runs to 564 residues: MFS-type efflux pump LUC4 (564 aa).

Positions 1-15 are enriched in polar residues; it reads MGQSQDNTQLTTASP. A disordered region spans residues 1 to 35; that stretch reads MGQSQDNTQLTTASPQAEKDLSSNDNPPESEPAAP. Transmembrane regions (helical) follow at residues 42-62, 78-98, 108-128, 141-161, and 170-190; these read WLVFIAIALTTFLAALDTSII, LYVWIVDSYLLASTATIPIFA, SLTLIAVCLFTLGSGLCGGAH, GVGGGGILTMSEIVVCDMVSV, and IIGGVWAIASVIAPIMGGAFA. Asn192 is a glycosylation site (N-linked (GlcNAc...) asparagine). The next 3 helical transmembrane spans lie at 197–217, 236–256, and 268–288; these read WIFYINLPIAGVVLVALIVFL, WGGSVLLIASVTAVVLALSWG, and LVPLILGLVGQLAFFAYQGAP. Asn302 carries an N-linked (GlcNAc...) asparagine glycan. A run of 5 helical transmembrane segments spans residues 308–328, 343–363, 371–391, 404–424, and 436–456; these read LFVISFVHSMLLFWVCYFLPV, VMLFPIATTSAPGGVIAGIFI, VWHFVGFALMSISCGLFTLLD, LLFGFGTGFVFTSCLPPILAS, and AWTFLRNFGSIWGIAIPAAAF. Residue Asn461 is glycosylated (N-linked (GlcNAc...) asparagine). A helical transmembrane segment spans residues 512-532; that stretch reads KLVWQVSIAFSVLGFVLAFLV.

It belongs to the major facilitator superfamily. TCR/Tet family.

It localises to the membrane. Its function is as follows. MFS-type efflux pump; part of the gene cluster that mediates the biosynthesis of the mycotoxin lucilactaene and the lucilactaene-related compound NG-391 that act as cell cycle inhibitors with potent growth inhibitory activity against malarial parasites, moderate growth inhibitory activity against cancer cells, and no activity against bacteria and fungi. In Fusarium sp, this protein is MFS-type efflux pump LUC4.